The following is a 343-amino-acid chain: Holliday junction branch migration complex subunit RuvB (343 aa).

The interval 1 to 182 is large ATPase domain (RuvB-L); it reads MRDELLNTPT…FGISNRLDYY (182 aa). ATP is bound by residues isoleucine 21, arginine 22, glycine 63, lysine 66, threonine 67, threonine 68, 129-131, arginine 172, tyrosine 182, and arginine 219; that span reads EDF. Threonine 67 provides a ligand contact to Mg(2+). The segment at 183–253 is small ATPAse domain (RuvB-S); the sequence is SAELLQRIII…LARKTLAALE (71 aa). Residues 256–343 form a head domain (RuvB-H) region; that stretch reads EDGLDDMDKK…DGPLFQKGSS (88 aa). Residues arginine 311 and arginine 316 each contribute to the DNA site.

This sequence belongs to the RuvB family. In terms of assembly, homohexamer. Forms an RuvA(8)-RuvB(12)-Holliday junction (HJ) complex. HJ DNA is sandwiched between 2 RuvA tetramers; dsDNA enters through RuvA and exits via RuvB. An RuvB hexamer assembles on each DNA strand where it exits the tetramer. Each RuvB hexamer is contacted by two RuvA subunits (via domain III) on 2 adjacent RuvB subunits; this complex drives branch migration. In the full resolvosome a probable DNA-RuvA(4)-RuvB(12)-RuvC(2) complex forms which resolves the HJ.

It localises to the cytoplasm. It carries out the reaction ATP + H2O = ADP + phosphate + H(+). Functionally, the RuvA-RuvB-RuvC complex processes Holliday junction (HJ) DNA during genetic recombination and DNA repair, while the RuvA-RuvB complex plays an important role in the rescue of blocked DNA replication forks via replication fork reversal (RFR). RuvA specifically binds to HJ cruciform DNA, conferring on it an open structure. The RuvB hexamer acts as an ATP-dependent pump, pulling dsDNA into and through the RuvAB complex. RuvB forms 2 homohexamers on either side of HJ DNA bound by 1 or 2 RuvA tetramers; 4 subunits per hexamer contact DNA at a time. Coordinated motions by a converter formed by DNA-disengaged RuvB subunits stimulates ATP hydrolysis and nucleotide exchange. Immobilization of the converter enables RuvB to convert the ATP-contained energy into a lever motion, pulling 2 nucleotides of DNA out of the RuvA tetramer per ATP hydrolyzed, thus driving DNA branch migration. The RuvB motors rotate together with the DNA substrate, which together with the progressing nucleotide cycle form the mechanistic basis for DNA recombination by continuous HJ branch migration. Branch migration allows RuvC to scan DNA until it finds its consensus sequence, where it cleaves and resolves cruciform DNA. This is Holliday junction branch migration complex subunit RuvB from Prosthecochloris aestuarii (strain DSM 271 / SK 413).